A 293-amino-acid chain; its full sequence is Pyridoxal 5'-phosphate synthase subunit PdxS (293 aa).

D23 is a binding site for D-ribose 5-phosphate. Residue K80 is the Schiff-base intermediate with D-ribose 5-phosphate of the active site. D-ribose 5-phosphate is bound at residue G152. Position 164 (R164) interacts with D-glyceraldehyde 3-phosphate. D-ribose 5-phosphate contacts are provided by residues G213 and 234-235 (GS).

The protein belongs to the PdxS/SNZ family. As to quaternary structure, in the presence of PdxT, forms a dodecamer of heterodimers.

The enzyme catalyses aldehydo-D-ribose 5-phosphate + D-glyceraldehyde 3-phosphate + L-glutamine = pyridoxal 5'-phosphate + L-glutamate + phosphate + 3 H2O + H(+). It participates in cofactor biosynthesis; pyridoxal 5'-phosphate biosynthesis. Its function is as follows. Catalyzes the formation of pyridoxal 5'-phosphate from ribose 5-phosphate (RBP), glyceraldehyde 3-phosphate (G3P) and ammonia. The ammonia is provided by the PdxT subunit. Can also use ribulose 5-phosphate and dihydroxyacetone phosphate as substrates, resulting from enzyme-catalyzed isomerization of RBP and G3P, respectively. In Niallia circulans (Bacillus circulans), this protein is Pyridoxal 5'-phosphate synthase subunit PdxS.